A 557-amino-acid chain; its full sequence is Urocanate hydratase (557 aa).

Positions 1 to 20 are disordered; the sequence is MSNPRHNEREVRSPRGDELN. NAD(+) contacts are provided by residues 52-53, Gln-130, 176-178, Glu-196, Arg-201, 242-243, 263-267, 273-274, and Tyr-322; these read GG, GMG, NA, QTSAH, and YL. Cys-410 is an active-site residue. Residue Gly-492 coordinates NAD(+).

The protein belongs to the urocanase family. Requires NAD(+) as cofactor.

The protein resides in the cytoplasm. The enzyme catalyses 4-imidazolone-5-propanoate = trans-urocanate + H2O. Its pathway is amino-acid degradation; L-histidine degradation into L-glutamate; N-formimidoyl-L-glutamate from L-histidine: step 2/3. Functionally, catalyzes the conversion of urocanate to 4-imidazolone-5-propionate. The polypeptide is Urocanate hydratase (Brucella canis (strain ATCC 23365 / NCTC 10854 / RM-666)).